Here is a 411-residue protein sequence, read N- to C-terminus: LIM domain-binding protein 1 (411 aa).

Ser-2 is subject to N-acetylserine. Thr-61 is modified (phosphothreonine). Phosphoserine occurs at positions 265 and 302. Disordered stretches follow at residues Ala-283 to Leu-330 and Asp-367 to Gln-411. Low complexity predominate over residues Ser-302 to Asn-318. The region spanning Asp-336–Glu-375 is the LIM interaction domain (LID) domain.

This sequence belongs to the LDB family. As to quaternary structure, interacts with ESR1. Forms homodimers and heterodimers. Interacts with and activates LHX1/LIM1. Interacts with the LIM domains of ISL1 and LMO2. Can assemble in a complex with LMO2 and TAL1/SCL but does not interact with TAL1/SCL directly. Strongly interacts with the LIM2 domain of LMX1A and more weakly with the LIM1 domain. Homodimerization is not required for, and does not effect, LMX1A-binding. Component of a nuclear TAL-1 complex composed at least of CBFA2T3, LDB1, TAL1 and TCF3. Interacts with LHX6 and LHX9. At neuronal promoters, forms a complex with LHX3 involved in the specification of interneurons, in motor neurons, it is displaced by ISL1 to form a ternary complex in which ISL1 contacts both LHX3 and LDB1. Interacts with SLK; leading to negatively regulate SLK kinase activity. Interacts with YWHAZ. Interacts with PRDM1/BLIMP1. Interacts with LMO4. Interacts with RLIM/RNF12; the interaction inhibits the ubiquitination of LMO proteins. Ubiquitinated by RLIM/RNF12, leading to its degradation by the proteasome. Expressed in a wide range of adult tissues including brain, heart, skeletal muscle, colon, thymus, spleen, kidney, liver, small intestine, lung and peripheral blood leukocytes.

Its subcellular location is the nucleus. In terms of biological role, binds to the LIM domain of a wide variety of LIM domain-containing transcription factors. May regulate the transcriptional activity of LIM-containing proteins by determining specific partner interactions. Plays a role in the development of interneurons and motor neurons in cooperation with LHX3 and ISL1. Acts synergistically with LHX1/LIM1 in axis formation and activation of gene expression. Acts with LMO2 in the regulation of red blood cell development, maintaining erythroid precursors in an immature state. The protein is LIM domain-binding protein 1 (LDB1) of Homo sapiens (Human).